Reading from the N-terminus, the 719-residue chain is Alpha-galactosidase 2 (719 aa).

The active-site Nucleophile is the aspartate 472. The Proton donor role is filled by aspartate 542.

The protein belongs to the glycosyl hydrolase 36 family.

It carries out the reaction Hydrolysis of terminal, non-reducing alpha-D-galactose residues in alpha-D-galactosides, including galactose oligosaccharides, galactomannans and galactolipids.. Functionally, alpha-galactosidase associated with the sucrase operon. This is Alpha-galactosidase 2 (agaS) from Pediococcus pentosaceus.